The chain runs to 377 residues: Chaperone protein DnaJ (377 aa).

Residues 5–70 (DYYEVLGLQK…QKRAAYDQYG (66 aa)) form the J domain. The CR-type zinc-finger motif lies at 134-212 (GCKKDIRLST…CHGDGRVQKA (79 aa)). C147, C150, C164, C167, C186, C189, C200, and C203 together coordinate Zn(2+). 4 CXXCXGXG motif repeats span residues 147-154 (CDNCHGTG), 164-171 (CPHCHGAG), 186-193 (CPSCHGTG), and 200-207 (CHSCHGDG).

The protein belongs to the DnaJ family. In terms of assembly, homodimer. The cofactor is Zn(2+).

Its subcellular location is the cytoplasm. Functionally, participates actively in the response to hyperosmotic and heat shock by preventing the aggregation of stress-denatured proteins and by disaggregating proteins, also in an autonomous, DnaK-independent fashion. Unfolded proteins bind initially to DnaJ; upon interaction with the DnaJ-bound protein, DnaK hydrolyzes its bound ATP, resulting in the formation of a stable complex. GrpE releases ADP from DnaK; ATP binding to DnaK triggers the release of the substrate protein, thus completing the reaction cycle. Several rounds of ATP-dependent interactions between DnaJ, DnaK and GrpE are required for fully efficient folding. Also involved, together with DnaK and GrpE, in the DNA replication of plasmids through activation of initiation proteins. The polypeptide is Chaperone protein DnaJ (Haemophilus ducreyi (strain 35000HP / ATCC 700724)).